Here is a 561-residue protein sequence, read N- to C-terminus: MALIFANGHSDVPSTQPPIGKQKKEIGRESVNYHPSVWGDRFAILTAHEIEVDEITKQRAEKLKHDVLKMLHNVSVSLQDLNLIDEIQRLGVGYHFETEIENAMKRIYNSRDNDDDDLHAVALRFRLLRQHGYNVSSDVFKKFKDEKGEFKASLRENVRGLLSFYEAAYLGTADDTILDQAIDFTTDQLKSVLPNLNPPLSELVKLALDVPLHKRIERLQSRYFISIYQEEKERNEVLLEFAKLDFNVLQSLHKEELSQLSRWWKDNDFARKLPFIRDRLVECYFWILGVYYEPRYSRGRMMTTKVISLTSIMDDTYDVYGKLDELELLTTAIERWEWAAMDELPDYMKLHFSALLTAVENFEEELSKEGKAYRISYFKNAYTKLAKAYLEEARWASADYVPTLEEYMKHAQVSSAYPVLTLSSLLGMGATATKEAFEWAINMPNAINAISVVCRLKDDITSAELEQQRVHVATAVECYIKENGTTYEETCKLFKQKVDSAWKEINKEWMDPLQVPREIIKRAVNFARVIEFLYRYKDMYTESAGETKECIAMVLVDRFVD.

The tract at residues 6 to 26 (ANGHSDVPSTQPPIGKQKKEI) is disordered. Positions 277, 314, 318, 455, and 458 each coordinate (2E,6E)-farnesyl diphosphate. Residues Asp-314 and Asp-318 each coordinate Mg(2+). The DDXXD motif signature appears at 314–318 (DDTYD). The Mg(2+) site is built by Asp-458, Ser-462, and Glu-466.

This sequence belongs to the terpene synthase family. Tpsa subfamily. Monomer. Requires Mg(2+) as cofactor.

It localises to the cytoplasm. It carries out the reaction (2E,6E)-farnesyl diphosphate = beta-ylangene + diphosphate. It catalyses the reaction (2E,6E)-farnesyl diphosphate = beta-copaene + diphosphate. The catalysed reaction is (2E,6E)-farnesyl diphosphate = beta-cubebene + diphosphate. It participates in secondary metabolite biosynthesis; terpenoid biosynthesis. Its function is as follows. Sesquiterpene synthase involved in the biosynthesis of volatile organic compounds. Mediates the conversion of (2E,6E)-farnesyl diphosphate (FPP) into beta-ylangene, beta-copaene and beta-cubebene. Does not use (2E)-geranyl diphosphate (GPP) as substrate. The polypeptide is Sesquiterpene synthase TPS2 (Cananga odorata (Ylang-ylang tree)).